The following is an 82-amino-acid chain: U7-hexatoxin-Mg1a (82 aa).

The first 26 residues, 1–26, serve as a signal peptide directing secretion; that stretch reads MRTIVFLIVSILLLSSAVLMLAEGNA. Residues 27–44 constitute a propeptide that is removed on maturation; sequence ASHELQEYPIEESLEEQR. 4 disulfide bridges follow: cysteine 46–cysteine 62, cysteine 51–cysteine 67, cysteine 61–cysteine 77, and cysteine 69–cysteine 75. Arginine 80 carries the arginine amide modification.

The protein belongs to the rTX family. As to expression, expressed by the venom gland.

It localises to the secreted. Induces flaccid paralysis when injected into lepidopteran larvae. Intracranial injection into mice causes awkwardness of movement and laboured respiration until death. This chain is U7-hexatoxin-Mg1a, found in Macrothele gigas (Japanese funnel web spider).